The chain runs to 150 residues: MSNVDPSLLILLVLAGLGIISHNMTVTLAMIFLLVIKITPLNQYFPLVEKYGMTIGILILTIGVMTPIATGRISAQEVFNSFLNWKSLLAIAIGIIVSWLGARGVSLMNNQPSTVAGLLVGTVIGVALFRGVPVGPLIAAGILSLLIGKS.

4 helical membrane passes run 16–36 (GLGI…LLVI), 51–71 (YGMT…IATG), 82–102 (FLNW…WLGA), and 123–143 (VIGV…AGIL).

Belongs to the UPF0756 family.

Its subcellular location is the cell membrane. In Proteus mirabilis (strain HI4320), this protein is UPF0756 membrane protein PMI1560.